The chain runs to 316 residues: Cuticle collagen 13 (316 aa).

The N-terminal stretch at 1-36 is a signal peptide; it reads MSEDLKQIAQETESLRKVAFFGIAVSTIATLTAIIA. 2 stretches are compositionally biased toward low complexity: residues 127 to 157 and 183 to 204; these read SGAA…PGQD and APGQ…GAAL. The segment at 127 to 316 is disordered; the sequence is SGAAGPAGSP…CPPPRTAPGY (190 aa). Triple-helical region regions lie at residues 128–157, 176–202, 206–235, 240–266, and 269–304; these read GAAG…PGQD, GPPG…SGGA, GPPG…PGQV, GTPG…AGSS, and GGPG…EGAC. Positions 205–217 are enriched in pro residues; sequence PGPPGPAGPPGPA. Residues 219–234 show a composition bias toward low complexity; that stretch reads QPGSNGNAGAPGAPGQ. Over residues 241-251 the composition is skewed to pro residues; the sequence is TPGPAGPPGSP. 2 stretches are compositionally biased toward low complexity: residues 256–266 and 276–295; these read APGQPGQAGSS and DAGA…PGQD. Over residues 307–316 the composition is skewed to pro residues; it reads CPPPRTAPGY.

Belongs to the cuticular collagen family. Collagen polypeptide chains are complexed within the cuticle by disulfide bonds and other types of covalent cross-links.

Functionally, nematode cuticles are composed largely of collagen-like proteins. The cuticle functions both as an exoskeleton and as a barrier to protect the worm from its environment. This Caenorhabditis elegans protein is Cuticle collagen 13 (col-13).